Consider the following 272-residue polypeptide: uncharacterized protein (272 aa).

The 114-residue stretch at 20 to 133 (PVLIFIPGAN…PPINTFLPDS (114 aa)) folds into the AB hydrolase-1 domain.

This sequence belongs to the AB hydrolase superfamily.

This is an uncharacterized protein from Staphylococcus aureus (strain MSSA476).